The following is a 370-amino-acid chain: Phospho-2-dehydro-3-deoxyheptonate aldolase, tyrosine-inhibited (370 aa).

This sequence belongs to the class-I DAHP synthase family.

It carries out the reaction D-erythrose 4-phosphate + phosphoenolpyruvate + H2O = 7-phospho-2-dehydro-3-deoxy-D-arabino-heptonate + phosphate. It functions in the pathway metabolic intermediate biosynthesis; chorismate biosynthesis; chorismate from D-erythrose 4-phosphate and phosphoenolpyruvate: step 1/7. Its activity is regulated as follows. Inhibited by tyrosine. Stereospecific condensation of phosphoenolpyruvate (PEP) and D-erythrose-4-phosphate (E4P) giving rise to 3-deoxy-D-arabino-heptulosonate-7-phosphate (DAHP). This is Phospho-2-dehydro-3-deoxyheptonate aldolase, tyrosine-inhibited (ARO4) from Candida albicans (strain SC5314 / ATCC MYA-2876) (Yeast).